Here is a 345-residue protein sequence, read N- to C-terminus: uncharacterized protein (345 aa).

The next 2 helical transmembrane spans lie at 23–43 (VVGF…YSYV) and 56–76 (FLIA…FVAL). Positions 326–345 (VTEPTTNSKRKPVKAKKAKK) are disordered. Residues 333 to 345 (SKRKPVKAKKAKK) are compositionally biased toward basic residues.

It is found in the cell membrane. This is an uncharacterized protein from Mycoplasma pneumoniae (strain ATCC 29342 / M129 / Subtype 1) (Mycoplasmoides pneumoniae).